The following is a 229-amino-acid chain: Potassium/proton antiporter CemA (229 aa).

Transmembrane regions (helical) follow at residues 7-27 (LNPL…SLSF), 106-126 (IILH…YSIL), and 189-209 (IISG…KYWI).

The protein belongs to the CemA family.

Its subcellular location is the plastid. It localises to the chloroplast inner membrane. It catalyses the reaction K(+)(in) + H(+)(out) = K(+)(out) + H(+)(in). Contributes to K(+)/H(+) antiport activity by supporting proton efflux to control proton extrusion and homeostasis in chloroplasts in a light-dependent manner to modulate photosynthesis. Prevents excessive induction of non-photochemical quenching (NPQ) under continuous-light conditions. Indirectly promotes efficient inorganic carbon uptake into chloroplasts. The sequence is that of Potassium/proton antiporter CemA from Nymphaea alba (White water-lily).